The primary structure comprises 325 residues: ATP-dependent 6-phosphofructokinase (325 aa).

Gly12 lines the ATP pocket. Residue 22–26 (RTIVK) participates in ADP binding. ATP contacts are provided by residues 73–74 (RY) and 103–106 (GDGS). Position 104 (Asp104) interacts with Mg(2+). Substrate is bound at residue 126 to 128 (TID). Asp128 functions as the Proton acceptor in the catalytic mechanism. Arg155 serves as a coordination point for ADP. Substrate is bound at residue 170–172 (MGH). ADP contacts are provided by residues 186 to 188 (GAE), Lys213, and 215 to 217 (KRS). Residues Glu224, Arg246, and 252–255 (HTQR) each bind substrate.

This sequence belongs to the phosphofructokinase type A (PFKA) family. ATP-dependent PFK group I subfamily. Prokaryotic clade 'B1' sub-subfamily. In terms of assembly, homotetramer. Mg(2+) is required as a cofactor.

Its subcellular location is the cytoplasm. The enzyme catalyses beta-D-fructose 6-phosphate + ATP = beta-D-fructose 1,6-bisphosphate + ADP + H(+). Its pathway is carbohydrate degradation; glycolysis; D-glyceraldehyde 3-phosphate and glycerone phosphate from D-glucose: step 3/4. With respect to regulation, allosterically activated by ADP and other diphosphonucleosides, and allosterically inhibited by phosphoenolpyruvate. Functionally, catalyzes the phosphorylation of D-fructose 6-phosphate to fructose 1,6-bisphosphate by ATP, the first committing step of glycolysis. The chain is ATP-dependent 6-phosphofructokinase from Mycoplasma mobile (strain ATCC 43663 / 163K / NCTC 11711) (Mesomycoplasma mobile).